The chain runs to 268 residues: Undecaprenyl-diphosphatase (268 aa).

8 consecutive transmembrane segments (helical) span residues 3–23 (FFNLLEAAFLGLIEGLTEFIP), 46–66 (FEVLIQLGAILAILSVYSAKL), 84–104 (LGVLVAFLPAAVIGALAHGFI), 107–127 (VLFETPMLVCIMLIVGGFILL), 144–164 (YPLPICLAIGFIQCLAMIPGV), 185–205 (AEFSFFLAMPTMAGAFAYDLF), 213–233 (FNDGALIVVGFIMAFISGVFV), and 246–266 (FALFGWWRLIVGSAGMAALII).

It belongs to the UppP family.

The protein localises to the cell inner membrane. It carries out the reaction di-trans,octa-cis-undecaprenyl diphosphate + H2O = di-trans,octa-cis-undecaprenyl phosphate + phosphate + H(+). Functionally, catalyzes the dephosphorylation of undecaprenyl diphosphate (UPP). Confers resistance to bacitracin. In Brucella abortus (strain S19), this protein is Undecaprenyl-diphosphatase.